The chain runs to 510 residues: MTSLIAQWLHITQDLNSALTRQARFDTLLTTIRDVLNCDSSALLLFEDQHFKPLAINGLAKEVLGRRFSIEQHPRLEAIARAGDIVRFPSESTLPDPYDGLITNHQGKLHVHSCIGLPLLIDDQLIGAITIDALDPNQFDQLKNQELRFISALAAGGLHTALLLEQLETQASLPRESYAEKRTLSNEIIGNSQGMRTLQEQIDAVANTELSVLVMGETGVGKELVANAIHHRSDRASNNLVYLNCAALPESVAESELFGHIKGAFTGAISHRKGKFEQADGGTLFLDEVGELSLELQAKLLRALQYGDIQRVGDDRHIRVNTRIVAATNRVLHEEVKAGRFRADLYHRLSVFPLHVPPLREREEDVILLAGFFAEQVRGKLGLHSVRLSPSLVAELREYHWPGNVRELEHVIKRAAVLAKARTPQMDIELISQDFDIKTPTSPMMPTVAASQAQHEIHVDIGLKQATDAFQKQLILRALESNQGNWAATARQLELDSGNLHRLAKRLGIK.

A Sigma-54 factor interaction domain is found at 188–417 (IIGNSQGMRT…LEHVIKRAAV (230 aa)). ATP is bound by residues 216–223 (GETGVGKE) and 279–288 (ADGGTLFLDE). Positions 486–505 (WAATARQLELDSGNLHRLAK) form a DNA-binding region, H-T-H motif.

The protein operates within nitrogen metabolism; nitric oxide reduction. Required for the expression of anaerobic nitric oxide (NO) reductase, acts as a transcriptional activator for at least the norVW operon. Activation also requires sigma-54. The protein is Anaerobic nitric oxide reductase transcription regulator NorR of Vibrio vulnificus (strain YJ016).